Here is a 111-residue protein sequence, read N- to C-terminus: Fluoride-specific ion channel FluC 3 (111 aa).

Helical transmembrane passes span 26–46 (IPAG…LLTF), 53–73 (VVYL…TFAY), and 91–111 (IFLN…ALML). 2 residues coordinate Na(+): glycine 63 and threonine 66.

This sequence belongs to the fluoride channel Fluc/FEX (TC 1.A.43) family.

It is found in the cell membrane. The enzyme catalyses fluoride(in) = fluoride(out). Na(+) is not transported, but it plays an essential structural role and its presence is essential for fluoride channel function. In terms of biological role, fluoride-specific ion channel. Important for reducing fluoride concentration in the cell, thus reducing its toxicity. The chain is Fluoride-specific ion channel FluC 3 from Methanosarcina acetivorans (strain ATCC 35395 / DSM 2834 / JCM 12185 / C2A).